Reading from the N-terminus, the 87-residue chain is Cytochrome c5 (87 aa).

Heme is bound by residues C19, C22, H23, and M63. The cysteines at positions 69 and 72 are disulfide-linked.

The protein belongs to the cytochrome c family. In terms of assembly, homodimer. Binds 1 heme group per subunit.

In terms of biological role, it is unreactive with cytochrome c reductase or oxidase but seems to function as an intermediate in nitrate respiration of facultative anaerobic pseudmonads. This is Cytochrome c5 from Ectopseudomonas mendocina (Pseudomonas mendocina).